The sequence spans 814 residues: Immunoglobulin superfamily DCC subclass member 3 (814 aa).

Residues 1–35 (MAVQRAASPRRPPAPLWPRLLLPLLLLLLPAPSEG) form the signal peptide. Ig-like C2-type domains lie at 36-139 (LGHS…ATMS), 140-220 (DFHV…IRIS), 238-321 (PAIL…RTAQ), and 329-416 (PAEF…ARLT). 2 disulfide bridges follow: Cys-63-Cys-117 and Cys-160-Cys-209. Residue Asn-93 is glycosylated (N-linked (GlcNAc...) asparagine). N-linked (GlcNAc...) asparagine glycosylation occurs at Asn-246. Disulfide bonds link Cys-259–Cys-307 and Cys-351–Cys-400. 2 N-linked (GlcNAc...) asparagine glycosylation sites follow: Asn-381 and Asn-382. Fibronectin type-III domains follow at residues 426 to 520 (PPRN…TLGE) and 523 to 618 (APPP…ASER). 3 N-linked (GlcNAc...) asparagine glycosylation sites follow: Asn-580, Asn-604, and Asn-634. Residues 641–661 (IVIGIHIGVTCIIFCVLFLLF) traverse the membrane as a helical segment. Disordered regions lie at residues 722-743 (PPAS…APAP) and 762-814 (GKTT…HSEQ). A compositionally biased stretch (low complexity) spans 770–781 (TEATAPCAGLAA).

It belongs to the immunoglobulin superfamily. DCC family.

Its subcellular location is the membrane. This Homo sapiens (Human) protein is Immunoglobulin superfamily DCC subclass member 3 (IGDCC3).